The primary structure comprises 495 residues: Anaerobic nitric oxide reductase flavorubredoxin (495 aa).

A zinc metallo-hydrolase region spans residues 30–210 (HKGTSYNSYL…PFSPLVTAKI (181 aa)). Residues H79, E81, D83, H147, D166, and H227 each contribute to the Fe cation site. Residues 254-393 (ITLFYDSMSN…ECREHGRQLA (140 aa)) enclose the Flavodoxin-like domain. FMN contacts are provided by residues 260–264 (SMSNN) and 342–369 (AFGS…DISI). Residues 438–489 (DQAMLCTVCQWVYDPAQGEPDQLVAPGTPWAQVPDSFLCPGCGIGKEVFEPC) enclose the Rubredoxin-like domain. Fe cation is bound by residues C443, C446, C476, and C479.

The protein in the N-terminal section; belongs to the zinc metallo-hydrolase group 3 family. In terms of assembly, homotetramer. Fe cation serves as cofactor. FMN is required as a cofactor.

It is found in the cytoplasm. It functions in the pathway nitrogen metabolism; nitric oxide reduction. In terms of biological role, anaerobic nitric oxide reductase; uses NADH to detoxify nitric oxide (NO), protecting several 4Fe-4S NO-sensitive enzymes. Has at least 2 reductase partners, only one of which (NorW, flavorubredoxin reductase) has been identified. NO probably binds to the di-iron center; electrons enter from the NorW at rubredoxin and are transferred sequentially to the FMN center and the di-iron center. Also able to function as an aerobic oxygen reductase. The polypeptide is Anaerobic nitric oxide reductase flavorubredoxin (Aeromonas hydrophila subsp. hydrophila (strain ATCC 7966 / DSM 30187 / BCRC 13018 / CCUG 14551 / JCM 1027 / KCTC 2358 / NCIMB 9240 / NCTC 8049)).